The chain runs to 489 residues: Probable serine protease EDA2 (489 aa).

Residues methionine 1–alanine 25 form the signal peptide. Asparagine 35, asparagine 51, and asparagine 162 each carry an N-linked (GlcNAc...) asparagine glycan. Catalysis depends on serine 178, which acts as the Charge relay system. 4 N-linked (GlcNAc...) asparagine glycosylation sites follow: asparagine 253, asparagine 293, asparagine 365, and asparagine 406. The Charge relay system role is filled by aspartate 410. Asparagine 419 carries an N-linked (GlcNAc...) asparagine glycan. Histidine 436 serves as the catalytic Charge relay system. Asparagine 456 carries an N-linked (GlcNAc...) asparagine glycan.

Belongs to the peptidase S28 family.

The protein resides in the secreted. May be involved in a proteolytic pathway controlling the nuclear division phase of megagametogenesis. This Arabidopsis thaliana (Mouse-ear cress) protein is Probable serine protease EDA2 (EDA2).